A 131-amino-acid chain; its full sequence is MILVDSNIPMYLVGASHPHKLDAQRLLESALSGGERLVTDAEVLQEICHRYVAIKRREAIQPAFDAIIGVVDEVLPIERTDVEHARDALLRYQTLSARDALHIAVMAHHDITRLMSFDRGFDSYPGIKRLA.

Residues 2-128 (ILVDSNIPMY…RGFDSYPGIK (127 aa)) enclose the PINc domain. Residues Asp-5 and Asp-99 each contribute to the Mg(2+) site.

The protein belongs to the PINc/VapC protein family. The cofactor is Mg(2+).

Its subcellular location is the secreted. Functionally, toxic component of a type II toxin-antitoxin (TA) system. An RNase. The cognate antitoxin is VapB13. The protein is Ribonuclease VapC13 of Mycobacterium tuberculosis (strain ATCC 25618 / H37Rv).